The chain runs to 210 residues: Cytochrome c biogenesis ATP-binding export protein CcmA (210 aa).

The 204-residue stretch at 4–207 (LAVRDLAVAR…RQSRPAGFNE (204 aa)) folds into the ABC transporter domain. 36–43 (GPNGIGKT) provides a ligand contact to ATP.

The protein belongs to the ABC transporter superfamily. CcmA exporter (TC 3.A.1.107) family. As to quaternary structure, the complex is composed of two ATP-binding proteins (CcmA) and two transmembrane proteins (CcmB).

The protein resides in the cell inner membrane. The enzyme catalyses heme b(in) + ATP + H2O = heme b(out) + ADP + phosphate + H(+). In terms of biological role, part of the ABC transporter complex CcmAB involved in the biogenesis of c-type cytochromes; once thought to export heme, this seems not to be the case, but its exact role is uncertain. Responsible for energy coupling to the transport system. The sequence is that of Cytochrome c biogenesis ATP-binding export protein CcmA from Paracoccus denitrificans (strain Pd 1222).